The primary structure comprises 132 residues: Small ribosomal subunit protein uS8 (132 aa).

This sequence belongs to the universal ribosomal protein uS8 family. Part of the 30S ribosomal subunit. Contacts proteins S5 and S12.

Functionally, one of the primary rRNA binding proteins, it binds directly to 16S rRNA central domain where it helps coordinate assembly of the platform of the 30S subunit. This chain is Small ribosomal subunit protein uS8, found in Streptomyces avermitilis (strain ATCC 31267 / DSM 46492 / JCM 5070 / NBRC 14893 / NCIMB 12804 / NRRL 8165 / MA-4680).